Reading from the N-terminus, the 681-residue chain is RNA polymerase sigma factor RpoD (681 aa).

Disordered stretches follow at residues 1–60 (MKKK…ETAK) and 239–270 (DDDE…VSEK). The segment covering 261-270 (EERKKVVSEK) has biased composition (basic and acidic residues). Residues 446–516 (MAKSNLRLVV…SRAIADQART (71 aa)) are sigma-70 factor domain-2. Residues 470-473 (DLIQ) carry the Interaction with polymerase core subunit RpoC motif. The interval 525–601 (DTINRINKVM…DKNIVSSIDH (77 aa)) is sigma-70 factor domain-3. Positions 614–668 (VLDQLNEREKAVIRMRFGLLDDESDRTLEEIGKELNVTRERVRQIESSAIKKLRS) are sigma-70 factor domain-4. The segment at residues 641–660 (LEEIGKELNVTRERVRQIES) is a DNA-binding region (H-T-H motif).

This sequence belongs to the sigma-70 factor family. RpoD/SigA subfamily. In terms of assembly, interacts transiently with the RNA polymerase catalytic core.

Its subcellular location is the cytoplasm. In terms of biological role, sigma factors are initiation factors that promote the attachment of RNA polymerase to specific initiation sites and are then released. This sigma factor is the primary sigma factor during exponential growth. The chain is RNA polymerase sigma factor RpoD from Helicobacter pylori (strain J99 / ATCC 700824) (Campylobacter pylori J99).